Here is a 558-residue protein sequence, read N- to C-terminus: Glutamine--tRNA ligase (558 aa).

Residues 36–46 carry the 'HIGH' region motif; the sequence is PEPNGYLHIGH. Residues 37 to 39 and 43 to 49 each bind ATP; these read EPN and HIGHAKS. 2 residues coordinate L-glutamine: aspartate 69 and tyrosine 214. Residues threonine 233, 263 to 264, and 271 to 273 each bind ATP; these read RL and LSK. Positions 270–274 match the 'KMSKS' region motif; that stretch reads LLSKR.

The protein belongs to the class-I aminoacyl-tRNA synthetase family. In terms of assembly, monomer.

It is found in the cytoplasm. The catalysed reaction is tRNA(Gln) + L-glutamine + ATP = L-glutaminyl-tRNA(Gln) + AMP + diphosphate. The polypeptide is Glutamine--tRNA ligase (Bradyrhizobium diazoefficiens (strain JCM 10833 / BCRC 13528 / IAM 13628 / NBRC 14792 / USDA 110)).